Here is a 177-residue protein sequence, read N- to C-terminus: uncharacterized protein (177 aa).

An N-terminal signal peptide occupies residues 1–22 (MCGVVVVIVALVPADPLLPAFA). 3 helical membrane-spanning segments follow: residues 31 to 51 (VFIP…TCVF), 94 to 114 (ISLM…LKFV), and 136 to 156 (LFPI…LLEI).

It localises to the membrane. This is an uncharacterized protein from Saccharomyces cerevisiae (strain ATCC 204508 / S288c) (Baker's yeast).